We begin with the raw amino-acid sequence, 386 residues long: 8-amino-7-oxononanoate synthase (386 aa).

R31 is a binding site for substrate. 109 to 110 (GY) provides a ligand contact to pyridoxal 5'-phosphate. A substrate-binding site is contributed by H134. Residues S180, 205–208 (DEAH), and 236–239 (TLSK) each bind pyridoxal 5'-phosphate. The residue at position 239 (K239) is an N6-(pyridoxal phosphate)lysine. T349 provides a ligand contact to substrate.

This sequence belongs to the class-II pyridoxal-phosphate-dependent aminotransferase family. BioF subfamily. As to quaternary structure, homodimer. Pyridoxal 5'-phosphate is required as a cofactor.

It carries out the reaction 6-carboxyhexanoyl-[ACP] + L-alanine + H(+) = (8S)-8-amino-7-oxononanoate + holo-[ACP] + CO2. It participates in cofactor biosynthesis; biotin biosynthesis. In terms of biological role, catalyzes the decarboxylative condensation of pimeloyl-[acyl-carrier protein] and L-alanine to produce 8-amino-7-oxononanoate (AON), [acyl-carrier protein], and carbon dioxide. The chain is 8-amino-7-oxononanoate synthase from Mycobacterium bovis (strain ATCC BAA-935 / AF2122/97).